The following is a 212-amino-acid chain: Glycerol-3-phosphate acyltransferase (212 aa).

A run of 5 helical transmembrane segments spans residues 3-23 (ILLA…VIVS), 51-71 (KAAI…VWLA), 78-98 (DVAI…PVFF), 115-135 (AVHP…AFFF), and 139-159 (SLAA…LFGT).

It belongs to the PlsY family. As to quaternary structure, probably interacts with PlsX.

The protein resides in the cell inner membrane. The enzyme catalyses an acyl phosphate + sn-glycerol 3-phosphate = a 1-acyl-sn-glycero-3-phosphate + phosphate. It participates in lipid metabolism; phospholipid metabolism. Catalyzes the transfer of an acyl group from acyl-phosphate (acyl-PO(4)) to glycerol-3-phosphate (G3P) to form lysophosphatidic acid (LPA). This enzyme utilizes acyl-phosphate as fatty acyl donor, but not acyl-CoA or acyl-ACP. This is Glycerol-3-phosphate acyltransferase from Burkholderia multivorans (strain ATCC 17616 / 249).